The primary structure comprises 431 residues: L-lysine N6-monooxygenase MbtG (431 aa).

The N-terminal stretch at 1-21 (MNPTLAVLGAGAKAVAVAAKA) is a signal peptide.

The protein belongs to the lysine N(6)-hydroxylase/L-ornithine N(5)-oxygenase family. FAD is required as a cofactor.

It carries out the reaction L-lysine + NADPH + O2 = N(6)-hydroxy-L-lysine + NADP(+) + H2O. It functions in the pathway siderophore biosynthesis; mycobactin biosynthesis. Functionally, flavoprotein monooxygenase required for N-hydroxylation of the two acylated lysine residues during mycobactin assembly, thus producing the hydroxamate groups necessary for iron sequestration. Is also able, but less efficiently, to hydroxylate L-lysine (non acylated) in vitro. This Mycobacterium bovis (strain ATCC BAA-935 / AF2122/97) protein is L-lysine N6-monooxygenase MbtG (mbtG).